The chain runs to 208 residues: Uridine kinase (208 aa).

Residue 11 to 18 participates in ATP binding; that stretch reads GGSGSGKT.

This sequence belongs to the uridine kinase family.

It localises to the cytoplasm. It carries out the reaction uridine + ATP = UMP + ADP + H(+). The catalysed reaction is cytidine + ATP = CMP + ADP + H(+). It participates in pyrimidine metabolism; CTP biosynthesis via salvage pathway; CTP from cytidine: step 1/3. The protein operates within pyrimidine metabolism; UMP biosynthesis via salvage pathway; UMP from uridine: step 1/1. The polypeptide is Uridine kinase (Staphylococcus carnosus (strain TM300)).